Here is a 417-residue protein sequence, read N- to C-terminus: MSEFKSDFLHTLSERGFIHQTSDDAGLDQLFRTETVTAYIGFDPTAASLHAGGLIQIMMLHWLQATGHRPISLMGGGTGMVGDPSFKDEARQLMTPETIAANIASIKTVFSNYLRYGDGPKDALMINNADWLLGINYLEFLRDVGRHFSVNRMLSFDSVKMRLEREQSLSFLEFNYMILQAYDFVELYERTGCRLQMGGSDQWGNIVNGIDLGHRMGTPQLYALTSPLLTTASGAKMGKSLSGAVWLNPDMLGPYEFWQYWRNTEDADVARFLKLYTTLPMAEINRLSKLGGSEINEVKKVLATEVTAMLHGRAAAEQAAETARKTFEEGALAENLPSVEVPAPELESGLGLLTLLVRAGLAASNGEARRHVQGGAVRINDDQVSDERRVIGSGDVTGDGVIKLSLGKKKHLLVRPV.

Tyrosine 39 serves as a coordination point for L-tyrosine. The short motif at proline 44–glycine 53 is the 'HIGH' region element. L-tyrosine is bound by residues tyrosine 176 and glutamine 180. The 'KMSKS' region signature appears at lysine 236 to serine 240. An ATP-binding site is contributed by lysine 239. In terms of domain architecture, S4 RNA-binding spans leucine 350–valine 417.

Belongs to the class-I aminoacyl-tRNA synthetase family. TyrS type 1 subfamily. As to quaternary structure, homodimer.

Its subcellular location is the cytoplasm. The catalysed reaction is tRNA(Tyr) + L-tyrosine + ATP = L-tyrosyl-tRNA(Tyr) + AMP + diphosphate + H(+). Catalyzes the attachment of tyrosine to tRNA(Tyr) in a two-step reaction: tyrosine is first activated by ATP to form Tyr-AMP and then transferred to the acceptor end of tRNA(Tyr). The sequence is that of Tyrosine--tRNA ligase from Rhizobium meliloti (strain 1021) (Ensifer meliloti).